The following is a 298-amino-acid chain: Transcription factor SRM1 (298 aa).

The region spanning 7-62 (SDGSVWSREDDIAFERALANNTDESEERWEKIAADVPGKSVEQIKEHYELLVEDVT) is the SANT domain. The segment at 68-118 (CVPLPAYGSPEGSNGHAGDEGASSKKGGNSHAGESNQAGKSKSDQERRKGI) is disordered. Basic and acidic residues predominate over residues 108-118 (SKSDQERRKGI). In terms of domain architecture, HTH myb-type spans 111–168 (DQERRKGIAWTEDEHRLFLLGLDKYGKGDWRSISRNFVVTRTPTQVASHAQKYFIRLN). Positions 140 to 164 (WRSISRNFVVTRTPTQVASHAQKYF) form a DNA-binding region, H-T-H motif. A compositionally biased stretch (polar residues) spans 182–200 (ITSVGNADVSTPQGPITGQ). A disordered region spans residues 182–245 (ITSVGNADVS…GPPMYGTPAI (64 aa)). Positions 201–215 (NNSNNNNNNNNNNSS) are enriched in low complexity.

As to expression, expressed in young seedlings, developing leaves, sepals and trichomes.

It localises to the nucleus. In terms of biological role, transcription activator that coordinates abscisic acid (ABA) biosynthesis and signaling-related genes via binding to the specific promoter motif 5'-(A/T)AACCAT-3'. Represses ABA-mediated salt (e.g. NaCl and KCl) stress tolerance. Regulates leaf shape and promotes vegetative growth. In Arabidopsis thaliana (Mouse-ear cress), this protein is Transcription factor SRM1.